We begin with the raw amino-acid sequence, 65 residues long: Small ribosomal subunit protein bS21 (65 aa).

Residues 43–65 are disordered; that stretch reads VDDRLKRARSKRRAQRANEESNA. Positions 48–57 are enriched in basic residues; it reads KRARSKRRAQ.

The protein belongs to the bacterial ribosomal protein bS21 family.

The polypeptide is Small ribosomal subunit protein bS21 (Chloroherpeton thalassium (strain ATCC 35110 / GB-78)).